The sequence spans 76 residues: Protein TraJ (76 aa).

The protein localises to the cytoplasm. Functionally, this protein is essential for positively regulating the expression of transfer genes that are involved in the conjugal transfer of DNA between bacterial cells. The protein is Protein TraJ (traJ) of Escherichia coli.